The chain runs to 255 residues: Methionine aminopeptidase (255 aa).

His76 provides a ligand contact to substrate. The a divalent metal cation site is built by Asp93, Asp104, and His167. His174 serves as a coordination point for substrate. Glu201 and Glu232 together coordinate a divalent metal cation.

It belongs to the peptidase M24A family. Methionine aminopeptidase type 1 subfamily. Monomer. It depends on Co(2+) as a cofactor. Zn(2+) is required as a cofactor. The cofactor is Mn(2+). Requires Fe(2+) as cofactor.

It catalyses the reaction Release of N-terminal amino acids, preferentially methionine, from peptides and arylamides.. Its function is as follows. Removes the N-terminal methionine from nascent proteins. The N-terminal methionine is often cleaved when the second residue in the primary sequence is small and uncharged (Met-Ala-, Cys, Gly, Pro, Ser, Thr, or Val). Requires deformylation of the N(alpha)-formylated initiator methionine before it can be hydrolyzed. The polypeptide is Methionine aminopeptidase (Treponema pallidum (strain Nichols)).